The chain runs to 129 residues: MFAVIKTGGKQYRVAANDLIKVEKVAGEAGDIVEFAEVLMVGSTIGAPTVAGAIVTAEVVEQGRARKVIAFKKRRRQNSKRTRGHRQELTTIRISEILTDGAKPSKKAAEKKAPKAAPKKAAAKAESAE.

Positions 100–129 (DGAKPSKKAAEKKAPKAAPKKAAAKAESAE) are disordered.

It belongs to the bacterial ribosomal protein bL21 family. Part of the 50S ribosomal subunit. Contacts protein L20.

In terms of biological role, this protein binds to 23S rRNA in the presence of protein L20. The chain is Large ribosomal subunit protein bL21 from Brucella anthropi (strain ATCC 49188 / DSM 6882 / CCUG 24695 / JCM 21032 / LMG 3331 / NBRC 15819 / NCTC 12168 / Alc 37) (Ochrobactrum anthropi).